We begin with the raw amino-acid sequence, 277 residues long: Large ribosomal subunit protein uL2c (277 aa).

Disordered stretches follow at residues 36-56 and 225-259; these read NKHS…HRGG and MNSV…GSKS.

This sequence belongs to the universal ribosomal protein uL2 family. Part of the 50S ribosomal subunit.

The protein localises to the plastid. It is found in the chloroplast. This chain is Large ribosomal subunit protein uL2c (rpl2), found in Psilotum nudum (Whisk fern).